A 481-amino-acid chain; its full sequence is Cysteine--tRNA ligase (481 aa).

C43 contributes to the Zn(2+) binding site. The 'HIGH' region signature appears at 45–55 (ATVQGLPHIGH). C221, H246, and E250 together coordinate Zn(2+). The 'KMSKS' region motif lies at 277–281 (KMSKS). K280 contacts ATP.

This sequence belongs to the class-I aminoacyl-tRNA synthetase family. In terms of assembly, monomer. The cofactor is Zn(2+).

It is found in the cytoplasm. It catalyses the reaction tRNA(Cys) + L-cysteine + ATP = L-cysteinyl-tRNA(Cys) + AMP + diphosphate. This Mycobacterium sp. (strain JLS) protein is Cysteine--tRNA ligase.